Consider the following 788-residue polypeptide: Xylulose-5-phosphate phosphoketolase (788 aa).

The protein belongs to the XFP family. Homohexamer. The cofactor is thiamine diphosphate.

It carries out the reaction D-xylulose 5-phosphate + phosphate = acetyl phosphate + D-glyceraldehyde 3-phosphate + H2O. This is Xylulose-5-phosphate phosphoketolase (xpkA) from Lactiplantibacillus pentosus (Lactobacillus pentosus).